Reading from the N-terminus, the 570-residue chain is Hydroxylamine reductase (570 aa).

[4Fe-4S] cluster-binding residues include cysteine 5, cysteine 8, cysteine 17, and cysteine 23. Residues histidine 266, glutamate 290, cysteine 334, cysteine 425, cysteine 453, cysteine 478, glutamate 513, and lysine 515 each contribute to the hybrid [4Fe-2O-2S] cluster site. A Cysteine persulfide modification is found at cysteine 425.

The protein belongs to the HCP family. Requires [4Fe-4S] cluster as cofactor. Hybrid [4Fe-2O-2S] cluster is required as a cofactor.

The protein resides in the cytoplasm. It carries out the reaction A + NH4(+) + H2O = hydroxylamine + AH2 + H(+). In terms of biological role, catalyzes the reduction of hydroxylamine to form NH(3) and H(2)O. This is Hydroxylamine reductase from Clostridium botulinum (strain Kyoto / Type A2).